The primary structure comprises 577 residues: MNIQALINDKVSQALEAAGAPAGSPAAVRQSAKPQFGDYQANGVMGVAKKLGTNPREFAQKVLDVLDLDGIASKTEIAGPGFINIFLSEEFLAKQAEAALADSRLGVAADEAQTIVADYSAPNVAKEMHVGHLRSTIIGDAVVRTLEFLGHKVIRANHIGDWGTQFGMLIANLERVQQESGEVSMELADLEGFYRESKKLYDEDEEFAVKARNYVVKLQSGDEFCAEMWKKLVDVTMIQNQRNYDRLNVSLSRDDVMGESMYNDMLPKIVADLKAQGLAVEDDGAQVVFLEEFKNKDGEAMGVIVQKRDGGFLYTTTDIACAKYRYEELGADRVLYFIDSRQHQHLMQAWTIVRKAGYVPESVSLEHHAFGMMLGKDGKPFKTRAGGTVRLADLLDEAEVRAAQLIESKNPELAEDEKKAIANTVAMAAVKYADLSKHRTTDYVFDWDNMLAFEGNTAPYMQYAYTRVASVFAKAGVSMDDLQGEIKITDEKEKALIAKLMQFEEAVQSVAREGQPHIMCSYLFELAGQFSSFYEACPILVAEDEAVKQSRLKLAALTAKTIKQGLSLLGIDTLERM.

A 'HIGH' region motif is present at residues 122–132 (PNVAKEMHVGH).

It belongs to the class-I aminoacyl-tRNA synthetase family. As to quaternary structure, monomer.

Its subcellular location is the cytoplasm. The enzyme catalyses tRNA(Arg) + L-arginine + ATP = L-arginyl-tRNA(Arg) + AMP + diphosphate. The chain is Arginine--tRNA ligase from Vibrio campbellii (strain ATCC BAA-1116).